The sequence spans 147 residues: Hemoglobin subunit beta (147 aa).

Position 2 is an N-acetylvaline (Val-2). In terms of domain architecture, Globin spans 3–147; that stretch reads HLTPEEKNAV…VANALAHKYH (145 aa). A Phosphothreonine modification is found at Thr-13. Ser-45 is modified (phosphoserine). An N6-acetyllysine modification is found at Lys-60. Position 64 (His-64) interacts with heme b. Lys-83 carries the post-translational modification N6-acetyllysine. Residue His-93 participates in heme b binding. Cys-94 is subject to S-nitrosocysteine. Lys-145 is modified (N6-acetyllysine).

It belongs to the globin family. As to quaternary structure, heterotetramer of two alpha chains and two beta chains. Red blood cells.

Functionally, involved in oxygen transport from the lung to the various peripheral tissues. This is Hemoglobin subunit beta (HBB) from Macaca fascicularis (Crab-eating macaque).